Reading from the N-terminus, the 422-residue chain is Testin (422 aa).

The 108-residue stretch at 92–199 (MILTNPVPAK…GDVKLPGELE (108 aa)) folds into the PET domain. The tract at residues 198–224 (LETKATDKNNVNSGDRSTSAAVGAMED) is disordered. Residues 205–217 (KNNVNSGDRSTSA) are compositionally biased toward polar residues. LIM zinc-binding domains are found at residues 234–297 (YSCY…CDSE), 299–359 (PRCA…KHAA), and 362–422 (QGCH…KMMS).

The protein belongs to the prickle / espinas / testin family.

Its subcellular location is the cytoplasm. It localises to the cell junction. It is found in the focal adhesion. Scaffold protein that may play a role in cell adhesion, cell spreading and in the reorganization of the actin cytoskeleton. May play a role in the regulation of cell proliferation. May inhibit cell growth. The sequence is that of Testin (TES) from Gallus gallus (Chicken).